A 199-amino-acid polypeptide reads, in one-letter code: Molybdenum cofactor guanylyltransferase (199 aa).

GTP-binding positions include 12–14, Lys25, Asn53, Asp71, and Asp101; that span reads LAG. Position 101 (Asp101) interacts with Mg(2+).

The protein belongs to the MobA family. In terms of assembly, monomer. The cofactor is Mg(2+).

It localises to the cytoplasm. The catalysed reaction is Mo-molybdopterin + GTP + H(+) = Mo-molybdopterin guanine dinucleotide + diphosphate. Functionally, transfers a GMP moiety from GTP to Mo-molybdopterin (Mo-MPT) cofactor (Moco or molybdenum cofactor) to form Mo-molybdopterin guanine dinucleotide (Mo-MGD) cofactor. The protein is Molybdenum cofactor guanylyltransferase of Polynucleobacter asymbioticus (strain DSM 18221 / CIP 109841 / QLW-P1DMWA-1) (Polynucleobacter necessarius subsp. asymbioticus).